The sequence spans 682 residues: Penicillin-binding protein activator LpoA (682 aa).

Residues 1-26 form the signal peptide; that stretch reads MLSSITVRTKSGRLIPLVLAATLLAA. The N-palmitoyl cysteine moiety is linked to residue Cys-27. Cys-27 carries S-diacylglycerol cysteine lipidation.

The protein belongs to the LpoA family. As to quaternary structure, interacts with PBP1a.

It localises to the cell outer membrane. In terms of biological role, regulator of peptidoglycan synthesis that is essential for the function of penicillin-binding protein 1A (PBP1a). The protein is Penicillin-binding protein activator LpoA of Edwardsiella ictaluri (strain 93-146).